The sequence spans 157 residues: SsrA-binding protein (157 aa).

Residues 133-157 (LHDKRESEKKRDWGREKGRLLRARG) are disordered. Positions 135–151 (DKRESEKKRDWGREKGR) are enriched in basic and acidic residues.

Belongs to the SmpB family.

It is found in the cytoplasm. Functionally, required for rescue of stalled ribosomes mediated by trans-translation. Binds to transfer-messenger RNA (tmRNA), required for stable association of tmRNA with ribosomes. tmRNA and SmpB together mimic tRNA shape, replacing the anticodon stem-loop with SmpB. tmRNA is encoded by the ssrA gene; the 2 termini fold to resemble tRNA(Ala) and it encodes a 'tag peptide', a short internal open reading frame. During trans-translation Ala-aminoacylated tmRNA acts like a tRNA, entering the A-site of stalled ribosomes, displacing the stalled mRNA. The ribosome then switches to translate the ORF on the tmRNA; the nascent peptide is terminated with the 'tag peptide' encoded by the tmRNA and targeted for degradation. The ribosome is freed to recommence translation, which seems to be the essential function of trans-translation. The protein is SsrA-binding protein of Bradyrhizobium sp. (strain ORS 278).